A 222-amino-acid polypeptide reads, in one-letter code: Putative germin-like protein 3-2 (222 aa).

Residues 1 to 22 (MAKLILATFAVVFLALAATSLA) form the signal peptide. Cys-32 and Cys-50 are disulfide-bonded. N-linked (GlcNAc...) asparagine glycosylation is found at Asn-55 and Asn-71. The Cupin type-1 domain occupies 64-212 (DGLTNAGNTT…AFQVDGGMVE (149 aa)). Mn(2+) is bound by residues His-112, His-114, Glu-119, and His-158. N-linked (GlcNAc...) asparagine glycosylation is present at Asn-165.

The protein belongs to the germin family. Oligomer (believed to be a pentamer but probably hexamer).

Its subcellular location is the secreted. It is found in the extracellular space. The protein resides in the apoplast. Functionally, may play a role in plant defense. Probably has no oxalate oxidase activity even if the active site is conserved. The sequence is that of Putative germin-like protein 3-2 from Oryza sativa subsp. japonica (Rice).